We begin with the raw amino-acid sequence, 525 residues long: Vanin-like protein 2 (525 aa).

Positions methionine 1–leucine 27 are cleaved as a signal peptide. Residues asparagine 20 and asparagine 61 are each glycosylated (N-linked (GlcNAc...) asparagine). Residues tyrosine 33–lysine 303 form the CN hydrolase domain. Glutamate 72 functions as the Proton acceptor in the catalytic mechanism. Residues asparagine 99, asparagine 116, and asparagine 124 are each glycosylated (N-linked (GlcNAc...) asparagine). The Proton donor role is filled by lysine 167. Residue asparagine 176 is glycosylated (N-linked (GlcNAc...) asparagine). The active-site Nucleophile is cysteine 199. N-linked (GlcNAc...) asparagine glycosylation is found at asparagine 333, asparagine 348, and asparagine 375.

Belongs to the carbon-nitrogen hydrolase superfamily. BTD/VNN family. Expressed in third instar larvae.

Its subcellular location is the secreted. This chain is Vanin-like protein 2, found in Drosophila melanogaster (Fruit fly).